The chain runs to 348 residues: Phosphate acyltransferase (348 aa).

The protein belongs to the PlsX family. In terms of assembly, homodimer. Probably interacts with PlsY.

Its subcellular location is the cytoplasm. It catalyses the reaction a fatty acyl-[ACP] + phosphate = an acyl phosphate + holo-[ACP]. It functions in the pathway lipid metabolism; phospholipid metabolism. Its function is as follows. Catalyzes the reversible formation of acyl-phosphate (acyl-PO(4)) from acyl-[acyl-carrier-protein] (acyl-ACP). This enzyme utilizes acyl-ACP as fatty acyl donor, but not acyl-CoA. The sequence is that of Phosphate acyltransferase from Leuconostoc citreum (strain KM20).